A 168-amino-acid chain; its full sequence is Putative peroxiredoxin prxA (168 aa).

The region spanning 4–158 (LKAGDSFPAD…LEPAKNHLEF (155 aa)) is the Thioredoxin domain. The active-site Cysteine sulfenic acid (-SOH) intermediate is the Cys-61.

It belongs to the peroxiredoxin family. Prx5 subfamily. As to quaternary structure, homodimer; disulfide-linked, upon oxidation. Interacts with thioredoxin trxA.

It carries out the reaction a hydroperoxide + [thioredoxin]-dithiol = an alcohol + [thioredoxin]-disulfide + H2O. In terms of biological role, thiol-specific peroxidase that catalyzes the reduction of hydrogen peroxide and organic hydroperoxides to water and alcohols, respectively. Plays a role in cell protection against oxidative stress by detoxifying peroxides and as sensor of hydrogen peroxide-mediated signaling events. Involved in osmoadaptation. In Emericella nidulans (strain FGSC A4 / ATCC 38163 / CBS 112.46 / NRRL 194 / M139) (Aspergillus nidulans), this protein is Putative peroxiredoxin prxA.